Consider the following 112-residue polypeptide: Large ribosomal subunit protein mL53 (112 aa).

Belongs to the mitochondrion-specific ribosomal protein mL53 family. In terms of assembly, component of the mitochondrial ribosome large subunit (39S) which comprises a 16S rRNA and about 50 distinct proteins.

The protein localises to the mitochondrion. This Bos taurus (Bovine) protein is Large ribosomal subunit protein mL53 (MRPL53).